Consider the following 222-residue polypeptide: MTEMQPAILALLAITAALGLLVLAVVTTTAFVKVSVVLFLVRNALGTQTIPPNIVLYAAALILTMFVSAPVAEQTYDRITDPRLRYQSLDDWAEAAKAGSQPLLEHLKKFTNEEQRRFFLSSTEKVWPEEMRAGVTADDFAILVPSFLISELKRAFEIGFLLYLPFIVIDLIVTTILMAMGMSMVSPTIIAVPFKLFLFVAIDGWSRLMHGLVLSYTMPGAL.

A run of 4 helical transmembrane segments spans residues 6-26, 52-72, 158-178, and 182-202; these read PAILALLAITAALGLLVLAVV, PNIVLYAAALILTMFVSAPVA, IGFLLYLPFIVIDLIVTTILM, and MSMVSPTIIAVPFKLFLFVAI.

Belongs to the FliP/MopC/SpaP family.

The protein localises to the cell membrane. Could be involved in the secretion of an unknown factor. In Sinorhizobium fredii (strain NBRC 101917 / NGR234), this protein is Probable translocation protein y4yL.